The sequence spans 116 residues: Protein Rev (116 aa).

Phosphoserine; by host CK2 is present on residues Ser5 and Ser8. The interval 18-26 (LIKFLYQSN) is homomultimerization. Positions 23–48 (YQSNPPPNPEGTRQARRNRRRRWRER) are disordered. The Nuclear localization signal and RNA-binding (RRE) signature appears at 34–50 (TRQARRNRRRRWRERQR). Over residues 36 to 48 (QARRNRRRRWRER) the composition is skewed to basic residues. The Nuclear export signal and binding to XPO1 signature appears at 73–84 (LQLPPLERLNLD). Residues 90–116 (GTSGTQGVGSPEILVESPAVLEPGTKE) form a disordered region. Ser92 and Ser99 each carry phosphoserine; by host.

Belongs to the HIV-1 REV protein family. As to quaternary structure, homomultimer; when bound to the RRE. Multimeric assembly is essential for activity and may involve XPO1. Binds to human KPNB1, XPO1, TNPO1, RANBP5 and IPO7. Interacts with the viral Integrase. Interacts with human KHDRBS1. Interacts with human NAP1; this interaction decreases Rev multimerization and stimulates its activity. Interacts with human DEAD-box helicases DDX3 and DDX24; these interactions may serve for viral RNA export to the cytoplasm and packaging, respectively. Interacts with human PSIP1; this interaction may inhibit HIV-1 DNA integration by promoting dissociation of the Integrase-LEDGF/p75 complex. Post-translationally, asymmetrically arginine dimethylated at one site by host PRMT6. Methylation impairs the RNA-binding activity and export of viral RNA from the nucleus to the cytoplasm. Phosphorylated by protein kinase CK2. Presence of, and maybe binding to the N-terminus of the regulatory beta subunit of CK2 is necessary for CK2-mediated Rev's phosphorylation.

It is found in the host nucleus. It localises to the host nucleolus. The protein resides in the host cytoplasm. Functionally, escorts unspliced or incompletely spliced viral pre-mRNAs (late transcripts) out of the nucleus of infected cells. These pre-mRNAs carry a recognition sequence called Rev responsive element (RRE) located in the env gene, that is not present in fully spliced viral mRNAs (early transcripts). This function is essential since most viral proteins are translated from unspliced or partially spliced pre-mRNAs which cannot exit the nucleus by the pathway used by fully processed cellular mRNAs. Rev itself is translated from a fully spliced mRNA that readily exits the nucleus. Rev's nuclear localization signal (NLS) binds directly to KPNB1/Importin beta-1 without previous binding to KPNA1/Importin alpha-1. KPNB1 binds to the GDP bound form of RAN (Ran-GDP) and targets Rev to the nucleus. In the nucleus, the conversion from Ran-GDP to Ran-GTP dissociates Rev from KPNB1 and allows Rev's binding to the RRE in viral pre-mRNAs. Rev multimerization on the RRE via cooperative assembly exposes its nuclear export signal (NES) to the surface. Rev can then form a complex with XPO1/CRM1 and Ran-GTP, leading to nuclear export of the complex. Conversion from Ran-GTP to Ran-GDP mediates dissociation of the Rev/RRE/XPO1/RAN complex, so that Rev can return to the nucleus for a subsequent round of export. Beside KPNB1, also seems to interact with TNPO1/Transportin-1, RANBP5/IPO5 and IPO7/RANBP7 for nuclear import. The nucleoporin-like HRB/RIP is an essential cofactor that probably indirectly interacts with Rev to release HIV RNAs from the perinuclear region to the cytoplasm. In Human immunodeficiency virus type 1 group M subtype B (isolate OYI) (HIV-1), this protein is Protein Rev.